Here is a 980-residue protein sequence, read N- to C-terminus: Zinc finger BED domain-containing protein 6 (980 aa).

The segment at 1-89 (MSVCTLSVPV…ILAKKFSKDL (89 aa)) is required for nucleolar localization. A disordered region spans residues 89–109 (LGSGRPVADAPASLASGAPEQ). The BED-type 1 zinc finger occupies 130–187 (AKTSIVWHFFHVDPQYTWRAICNLCEKSVSRGKPGSHLGTSTLQRHLQARHSPHWTRA). The Zn(2+) site is built by C151, C154, H175, and H180. The segment at 201 to 239 (LDLSLSPPSPGSNGSFEYIPTDSVDENRMGKKRDKSASD) is disordered. Residues 203 to 215 (LSLSPPSPGSNGS) are compositionally biased toward low complexity. A BED-type 2 zinc finger spans residues 265-322 (AKTSAVWNFFYTDPQHISRAVCNICKRSVSRGRPGSHLGTSTLQRHLQATHPIHWAVA). Zn(2+) contacts are provided by C286, C289, H310, and H315. Positions 328 to 397 (AIGNGLDETE…ADQDNPVHAQ (70 aa)) are disordered. Residues 360–373 (TAEDLSDSDTDEPP) are compositionally biased toward acidic residues. A Phosphoserine modification is found at S383. The interval 868–950 (VVDEYFKEKY…EQLIFLKMNL (83 aa)) is HATC (Hobo-Ac-Tam3) domain.

As to expression, expressed in pancreatic islet cells and weakly expressed in surrounding exocrine tissues (at protein level). Expressed in muscle and brain (at protein level). Shows broad tissue distribution with expression detected in brain, stomach, intestine, heart, kidney, liver, lung, skeletal muscle, ovary, spleen, tail and testis.

The protein localises to the nucleus. The protein resides in the nucleolus. It is found in the cytoplasm. Transcriptional repressor which binds to the consensus sequence 5'-GCTCGC-3', transcription regulation may be tissue-specific. Regulates the expression of target genes such as: IGF2, PGAP6/TMEM8, ENHO, and PIANP. Acts as a transcriptional repressor of growth factor IGF2, thereby negatively regulating postnatal growth of muscles and internal organs, especially in females. Negatively regulates myoblast differentiation and myoblast mitochondrial activity via its regulation of IGF2 transcription. Negatively regulates the cell cycle of myoblasts, potentially via transcriptional regulation of the E2F family of transcription factors such as: E2F1 and E2F2. Positively regulates the cell cycle and survival of pancreatic beta cells. Binds to the CDH2 gene and may directly repress CDH2 transcription. Probably by controlling CDH2 expression, regulates pancreatic beta cell adhesion, and formation of cell-to-cell junctions between pancreatic beta cells and neural crest stem cells. May also play a role in embryonic beta cell differentiation. May play a role in insulin sensitivity and glucose clearance. This Mus musculus (Mouse) protein is Zinc finger BED domain-containing protein 6.